Here is a 343-residue protein sequence, read N- to C-terminus: Thiamine thiazole synthase 4, chloroplastic (343 aa).

Substrate-binding positions include alanine 89, 109–110 (EQ), glycine 117, and alanine 182. Cysteine 211 bears the 2,3-didehydroalanine (Cys) mark. Substrate-binding positions include aspartate 213, histidine 228, methionine 280, and 290 to 292 (RMG).

This sequence belongs to the THI4 family. In terms of assembly, homooctamer. It depends on Fe cation as a cofactor. Post-translationally, during the catalytic reaction, a sulfide is transferred from Cys-211 to a reaction intermediate, generating a dehydroalanine residue.

Its subcellular location is the plastid. The protein localises to the chloroplast. It catalyses the reaction [ADP-thiazole synthase]-L-cysteine + glycine + NAD(+) = [ADP-thiazole synthase]-dehydroalanine + ADP-5-ethyl-4-methylthiazole-2-carboxylate + nicotinamide + 3 H2O + 2 H(+). Involved in biosynthesis of the thiamine precursor thiazole. Catalyzes the conversion of NAD and glycine to adenosine diphosphate 5-(2-hydroxyethyl)-4-methylthiazole-2-carboxylic acid (ADT), an adenylated thiazole intermediate. The reaction includes an iron-dependent sulfide transfer from a conserved cysteine residue of the protein to a thiazole intermediate. The enzyme can only undergo a single turnover, which suggests it is a suicide enzyme. May have additional roles in adaptation to various stress conditions and in DNA damage tolerance. The chain is Thiamine thiazole synthase 4, chloroplastic from Physcomitrium patens (Spreading-leaved earth moss).